We begin with the raw amino-acid sequence, 85 residues long: uncharacterized protein (85 aa).

The next 2 membrane-spanning stretches (helical) occupy residues 20–42 and 52–69; these read IYWF…TTFL and IILR…KHYY.

The protein localises to the membrane. This is an uncharacterized protein from Saccharomyces cerevisiae (strain ATCC 204508 / S288c) (Baker's yeast).